The primary structure comprises 660 residues: Bifunctional polymyxin resistance protein ArnA (660 aa).

Residues Met-1 to Leu-304 are formyltransferase ArnAFT. His-104 acts as the Proton donor; for formyltransferase activity in catalysis. Residues Arg-114 and Val-136–Asp-140 each bind (6R)-10-formyltetrahydrofolate. A dehydrogenase ArnADH region spans residues Arg-314–Ala-660. NAD(+) is bound by residues Asp-347 and Asp-368 to Ile-369. UDP-alpha-D-glucuronate-binding positions include Ala-393, Tyr-398, and Thr-432–Ser-433. Glu-434 (proton acceptor; for decarboxylase activity) is an active-site residue. UDP-alpha-D-glucuronate is bound by residues Arg-460, Asn-492, Lys-526–Arg-535, and Tyr-613. The active-site Proton donor; for decarboxylase activity is Arg-619.

It in the N-terminal section; belongs to the Fmt family. UDP-L-Ara4N formyltransferase subfamily. This sequence in the C-terminal section; belongs to the NAD(P)-dependent epimerase/dehydratase family. UDP-glucuronic acid decarboxylase subfamily. In terms of assembly, homohexamer, formed by a dimer of trimers.

It carries out the reaction UDP-alpha-D-glucuronate + NAD(+) = UDP-beta-L-threo-pentopyranos-4-ulose + CO2 + NADH. The catalysed reaction is UDP-4-amino-4-deoxy-beta-L-arabinose + (6R)-10-formyltetrahydrofolate = UDP-4-deoxy-4-formamido-beta-L-arabinose + (6S)-5,6,7,8-tetrahydrofolate + H(+). Its pathway is nucleotide-sugar biosynthesis; UDP-4-deoxy-4-formamido-beta-L-arabinose biosynthesis; UDP-4-deoxy-4-formamido-beta-L-arabinose from UDP-alpha-D-glucuronate: step 1/3. It functions in the pathway nucleotide-sugar biosynthesis; UDP-4-deoxy-4-formamido-beta-L-arabinose biosynthesis; UDP-4-deoxy-4-formamido-beta-L-arabinose from UDP-alpha-D-glucuronate: step 3/3. The protein operates within bacterial outer membrane biogenesis; lipopolysaccharide biosynthesis. Functionally, bifunctional enzyme that catalyzes the oxidative decarboxylation of UDP-glucuronic acid (UDP-GlcUA) to UDP-4-keto-arabinose (UDP-Ara4O) and the addition of a formyl group to UDP-4-amino-4-deoxy-L-arabinose (UDP-L-Ara4N) to form UDP-L-4-formamido-arabinose (UDP-L-Ara4FN). The modified arabinose is attached to lipid A and is required for resistance to polymyxin and cationic antimicrobial peptides. This chain is Bifunctional polymyxin resistance protein ArnA, found in Serratia proteamaculans (strain 568).